We begin with the raw amino-acid sequence, 285 residues long: tRNA (guanine-N(7)-)-methyltransferase (285 aa).

S-adenosyl-L-methionine-binding positions include Gly102, 125 to 126, 160 to 161, and Cys180; these read EI and NA. Residue Asp183 is part of the active site. 258–260 contacts S-adenosyl-L-methionine; it reads TEE.

This sequence belongs to the class I-like SAM-binding methyltransferase superfamily. TrmB family. In terms of assembly, forms a complex with TRM82.

Its subcellular location is the nucleus. It carries out the reaction guanosine(46) in tRNA + S-adenosyl-L-methionine = N(7)-methylguanosine(46) in tRNA + S-adenosyl-L-homocysteine. It participates in tRNA modification; N(7)-methylguanine-tRNA biosynthesis. Functionally, catalyzes the formation of N(7)-methylguanine at position 46 (m7G46) in tRNA. The sequence is that of tRNA (guanine-N(7)-)-methyltransferase from Candida glabrata (strain ATCC 2001 / BCRC 20586 / JCM 3761 / NBRC 0622 / NRRL Y-65 / CBS 138) (Yeast).